Reading from the N-terminus, the 327-residue chain is ATP-dependent 6-phosphofructokinase (327 aa).

ATP contacts are provided by residues glycine 11, 72–73, and 102–105; these read RS and GDGS. Residue aspartate 103 participates in Mg(2+) binding. Residue 127–129 participates in substrate binding; the sequence is TID. The active-site Proton acceptor is the aspartate 129. Residue arginine 156 participates in ADP binding. Residues arginine 164 and 171–173 each bind substrate; that span reads MGR. An ADP-binding site is contributed by 187 to 189; sequence GAE. Substrate is bound by residues glutamate 224, arginine 245, and 251-254; that span reads HIQR.

It belongs to the phosphofructokinase type A (PFKA) family. ATP-dependent PFK group I subfamily. Prokaryotic clade 'B1' sub-subfamily. Homotetramer. Requires Mg(2+) as cofactor.

The protein resides in the cytoplasm. The enzyme catalyses beta-D-fructose 6-phosphate + ATP = beta-D-fructose 1,6-bisphosphate + ADP + H(+). It participates in carbohydrate degradation; glycolysis; D-glyceraldehyde 3-phosphate and glycerone phosphate from D-glucose: step 3/4. Allosterically activated by ADP and other diphosphonucleosides, and allosterically inhibited by phosphoenolpyruvate. Functionally, catalyzes the phosphorylation of D-fructose 6-phosphate to fructose 1,6-bisphosphate by ATP, the first committing step of glycolysis. The chain is ATP-dependent 6-phosphofructokinase from Sulfurovum sp. (strain NBC37-1).